The primary structure comprises 293 residues: MAWIQIRINSTNTQAEQMSDYLAEIGAVSVTFMDSQDTPIFEPLPGETRLWGNTDVVALFDAETDMQQIVDLLKEAQYLVESSVYKIEQIEDKDWEREWMDNFHPMRFGKRLWICPSWREVPDENATNVMLDPGLAFGTGTHPTTALCLEWLDSLDLQDKTVIDFGCGSGILAIAALKLGAKSAVGIDIDPQAILASRNNAEQNGVADRLQLFLSEDKPADLKADVVVANILAGPLKELYPVIRQLVKPNGVLGLSGILATQASSVCDAYAQSFVLEPVEEREEWCRITGKLQ.

S-adenosyl-L-methionine is bound by residues threonine 145, glycine 166, aspartate 188, and asparagine 230.

This sequence belongs to the methyltransferase superfamily. PrmA family.

It is found in the cytoplasm. It catalyses the reaction L-lysyl-[protein] + 3 S-adenosyl-L-methionine = N(6),N(6),N(6)-trimethyl-L-lysyl-[protein] + 3 S-adenosyl-L-homocysteine + 3 H(+). In terms of biological role, methylates ribosomal protein L11. This Pasteurella multocida (strain Pm70) protein is Ribosomal protein L11 methyltransferase.